Here is a 369-residue protein sequence, read N- to C-terminus: 5-amino-6-(D-ribitylamino)uracil--L-tyrosine 4-hydroxyphenyl transferase (369 aa).

In terms of domain architecture, Radical SAM core spans 56–292 (VTFVVNRNIN…AVARLYFGPL (237 aa)). 3 residues coordinate [4Fe-4S] cluster: Cys70, Cys74, and Cys77.

The protein belongs to the radical SAM superfamily. CofH family. As to quaternary structure, consists of two subunits, CofG and CofH. Requires [4Fe-4S] cluster as cofactor.

It carries out the reaction 5-amino-6-(D-ribitylamino)uracil + L-tyrosine + S-adenosyl-L-methionine = 5-amino-5-(4-hydroxybenzyl)-6-(D-ribitylimino)-5,6-dihydrouracil + 2-iminoacetate + 5'-deoxyadenosine + L-methionine + H(+). Its pathway is cofactor biosynthesis; coenzyme F0 biosynthesis. Catalyzes the radical-mediated synthesis of 5-amino-5-(4-hydroxybenzyl)-6-(D-ribitylimino)-5,6-dihydrouracil from 5-amino-6-(D-ribitylamino)uracil and L-tyrosine. This chain is 5-amino-6-(D-ribitylamino)uracil--L-tyrosine 4-hydroxyphenyl transferase, found in Methanopyrus kandleri (strain AV19 / DSM 6324 / JCM 9639 / NBRC 100938).